We begin with the raw amino-acid sequence, 360 residues long: Peptide chain release factor 1 (360 aa).

Gln235 is modified (N5-methylglutamine). Residues 286-311 are disordered; it reads QAQAQADTRRNLLGSGDRSDKIRTYN.

The protein belongs to the prokaryotic/mitochondrial release factor family. In terms of processing, methylated by PrmC. Methylation increases the termination efficiency of RF1.

It is found in the cytoplasm. Its function is as follows. Peptide chain release factor 1 directs the termination of translation in response to the peptide chain termination codons UAG and UAA. This chain is Peptide chain release factor 1, found in Histophilus somni (strain 2336) (Haemophilus somnus).